Reading from the N-terminus, the 460-residue chain is tRNA-2-methylthio-N(6)-dimethylallyladenosine synthase (460 aa).

The 117-residue stretch at 10–126 folds into the MTTase N-terminal domain; that stretch reads GSYWITTFGC…LEVLLNRVDS (117 aa). Residues cysteine 19, cysteine 55, cysteine 89, cysteine 161, cysteine 165, and cysteine 168 each coordinate [4Fe-4S] cluster. One can recognise a Radical SAM core domain in the interval 147–384; it reads RDSSICGWVN…NALVERCARE (238 aa). The region spanning 387 to 455 is the TRAM domain; the sequence is ARYAGRTEEV…SFSLSGTPLP (69 aa).

This sequence belongs to the methylthiotransferase family. MiaB subfamily. Monomer. The cofactor is [4Fe-4S] cluster.

The protein resides in the cytoplasm. The enzyme catalyses N(6)-dimethylallyladenosine(37) in tRNA + (sulfur carrier)-SH + AH2 + 2 S-adenosyl-L-methionine = 2-methylsulfanyl-N(6)-dimethylallyladenosine(37) in tRNA + (sulfur carrier)-H + 5'-deoxyadenosine + L-methionine + A + S-adenosyl-L-homocysteine + 2 H(+). Catalyzes the methylthiolation of N6-(dimethylallyl)adenosine (i(6)A), leading to the formation of 2-methylthio-N6-(dimethylallyl)adenosine (ms(2)i(6)A) at position 37 in tRNAs that read codons beginning with uridine. This is tRNA-2-methylthio-N(6)-dimethylallyladenosine synthase from Parasynechococcus marenigrum (strain WH8102).